The chain runs to 321 residues: tRNA-dihydrouridine synthase B (321 aa).

FMN-binding positions include Pro-16–Ala-18 and Gln-70. The active-site Proton donor is the Cys-100. FMN contacts are provided by residues Lys-139, Asn-200–Asp-202, and Gly-224–Arg-225.

It belongs to the Dus family. DusB subfamily. The cofactor is FMN.

The enzyme catalyses a 5,6-dihydrouridine in tRNA + NAD(+) = a uridine in tRNA + NADH + H(+). The catalysed reaction is a 5,6-dihydrouridine in tRNA + NADP(+) = a uridine in tRNA + NADPH + H(+). Its function is as follows. Catalyzes the synthesis of 5,6-dihydrouridine (D), a modified base found in the D-loop of most tRNAs, via the reduction of the C5-C6 double bond in target uridines. The chain is tRNA-dihydrouridine synthase B from Pectobacterium carotovorum (Erwinia carotovora).